The chain runs to 313 residues: HPr kinase/phosphorylase (313 aa).

Active-site residues include His-136 and Lys-157. Residue 151-158 coordinates ATP; sequence GDSGIGKS. Residue Ser-158 participates in Mg(2+) binding. The Proton acceptor; for phosphorylation activity. Proton donor; for dephosphorylation activity role is filled by Asp-175. The interval 199 to 208 is important for the catalytic mechanism of both phosphorylation and dephosphorylation; that stretch reads LEIRGLGIIN. Mg(2+) is bound at residue Glu-200. Arg-241 is a catalytic residue. Residues 262–267 are important for the catalytic mechanism of dephosphorylation; that stretch reads PVRPGR.

This sequence belongs to the HPrK/P family. In terms of assembly, homohexamer. Mg(2+) is required as a cofactor.

It carries out the reaction [HPr protein]-L-serine + ATP = [HPr protein]-O-phospho-L-serine + ADP + H(+). The catalysed reaction is [HPr protein]-O-phospho-L-serine + phosphate + H(+) = [HPr protein]-L-serine + diphosphate. Catalyzes the ATP- as well as the pyrophosphate-dependent phosphorylation of a specific serine residue in HPr, a phosphocarrier protein of the phosphoenolpyruvate-dependent sugar phosphotransferase system (PTS). HprK/P also catalyzes the pyrophosphate-producing, inorganic phosphate-dependent dephosphorylation (phosphorolysis) of seryl-phosphorylated HPr (P-Ser-HPr). The two antagonistic activities of HprK/P are regulated by several intracellular metabolites, which change their concentration in response to the absence or presence of rapidly metabolisable carbon sources (glucose, fructose, etc.) in the growth medium. Therefore, by controlling the phosphorylation state of HPr, HPrK/P is a sensor enzyme that plays a major role in the regulation of carbon metabolism and sugar transport: it mediates carbon catabolite repression (CCR), and regulates PTS-catalyzed carbohydrate uptake and inducer exclusion. The polypeptide is HPr kinase/phosphorylase (Staphylococcus saprophyticus subsp. saprophyticus (strain ATCC 15305 / DSM 20229 / NCIMB 8711 / NCTC 7292 / S-41)).